Reading from the N-terminus, the 402-residue chain is 4-hydroxy-3-methylbut-2-enyl diphosphate reductase (402 aa).

Cys66 lines the [4Fe-4S] cluster pocket. His96 is a (2E)-4-hydroxy-3-methylbut-2-enyl diphosphate binding site. His96 contributes to the dimethylallyl diphosphate binding site. An isopentenyl diphosphate-binding site is contributed by His96. Residue Cys157 coordinates [4Fe-4S] cluster. (2E)-4-hydroxy-3-methylbut-2-enyl diphosphate is bound at residue His185. His185 lines the dimethylallyl diphosphate pocket. His185 lines the isopentenyl diphosphate pocket. The active-site Proton donor is Glu187. Residue Thr250 participates in (2E)-4-hydroxy-3-methylbut-2-enyl diphosphate binding. A [4Fe-4S] cluster-binding site is contributed by Cys288. (2E)-4-hydroxy-3-methylbut-2-enyl diphosphate is bound by residues Ser317, Ser318, Asn319, and Ser379. Dimethylallyl diphosphate-binding residues include Ser317, Ser318, Asn319, and Ser379. Residues Ser317, Ser318, Asn319, and Ser379 each coordinate isopentenyl diphosphate.

This sequence belongs to the IspH family. [4Fe-4S] cluster serves as cofactor.

The enzyme catalyses isopentenyl diphosphate + 2 oxidized [2Fe-2S]-[ferredoxin] + H2O = (2E)-4-hydroxy-3-methylbut-2-enyl diphosphate + 2 reduced [2Fe-2S]-[ferredoxin] + 2 H(+). It catalyses the reaction dimethylallyl diphosphate + 2 oxidized [2Fe-2S]-[ferredoxin] + H2O = (2E)-4-hydroxy-3-methylbut-2-enyl diphosphate + 2 reduced [2Fe-2S]-[ferredoxin] + 2 H(+). The protein operates within isoprenoid biosynthesis; dimethylallyl diphosphate biosynthesis; dimethylallyl diphosphate from (2E)-4-hydroxy-3-methylbutenyl diphosphate: step 1/1. It participates in isoprenoid biosynthesis; isopentenyl diphosphate biosynthesis via DXP pathway; isopentenyl diphosphate from 1-deoxy-D-xylulose 5-phosphate: step 6/6. Catalyzes the conversion of 1-hydroxy-2-methyl-2-(E)-butenyl 4-diphosphate (HMBPP) into a mixture of isopentenyl diphosphate (IPP) and dimethylallyl diphosphate (DMAPP). Acts in the terminal step of the DOXP/MEP pathway for isoprenoid precursor biosynthesis. In Thermosynechococcus vestitus (strain NIES-2133 / IAM M-273 / BP-1), this protein is 4-hydroxy-3-methylbut-2-enyl diphosphate reductase.